Reading from the N-terminus, the 217-residue chain is Growth hormone variant (217 aa).

The N-terminal stretch at 1–26 (MAAGSWTCLILAIALLCLPWLQEGSA) is a signal peptide. Disulfide bonds link cysteine 79/cysteine 191 and cysteine 208/cysteine 215. Serine 132 and serine 176 each carry phosphoserine.

The protein belongs to the somatotropin/prolactin family. In terms of tissue distribution, expressed in the placenta.

It is found in the secreted. Functionally, plays an important role in growth control. Its major role in stimulating body growth is to stimulate the liver and other tissues to secrete IGF1. It stimulates both the differentiation and proliferation of myoblasts. It also stimulates amino acid uptake and protein synthesis in muscle and other tissues. The protein is Growth hormone variant (GH2) of Macaca mulatta (Rhesus macaque).